The following is a 220-amino-acid chain: MTKGILGRKIGMTQVFGENGELIPVTVVEASQNVVLQKKTEEVDGYNAIQVGFEDKQAYKKGSKSNKYANKPAEGHAKKADTAPKRFIREFRNVNVDEYELGQEVSVDTFETGDIIDVTGVSKGKGFQGAIKRHGQGRGPMAHGSHFHRAPGSVGMASDASKVFKGQKMPGRMGGNTVTVQNLEVVQVDTENSVILVKGNVPGPKKGLVEITTSIKKGNK.

The interval Lys-61–Asp-81 is disordered.

It belongs to the universal ribosomal protein uL3 family. In terms of assembly, part of the 50S ribosomal subunit. Forms a cluster with proteins L14 and L19.

Functionally, one of the primary rRNA binding proteins, it binds directly near the 3'-end of the 23S rRNA, where it nucleates assembly of the 50S subunit. This chain is Large ribosomal subunit protein uL3, found in Staphylococcus epidermidis (strain ATCC 12228 / FDA PCI 1200).